A 61-amino-acid polypeptide reads, in one-letter code: Small ribosomal subunit protein uS14 (61 aa).

Zn(2+)-binding residues include cysteine 24, cysteine 27, cysteine 40, and cysteine 43.

Belongs to the universal ribosomal protein uS14 family. Zinc-binding uS14 subfamily. As to quaternary structure, part of the 30S ribosomal subunit. Contacts proteins S3 and S10. Zn(2+) is required as a cofactor.

Binds 16S rRNA, required for the assembly of 30S particles and may also be responsible for determining the conformation of the 16S rRNA at the A site. The protein is Small ribosomal subunit protein uS14 of Clostridium novyi (strain NT).